The following is a 141-amino-acid chain: Protein C19orf12 (141 aa).

A helical membrane pass occupies residues 40–60 (FVGGLVGGPPGLAVGGAVGGL).

The protein belongs to the C19orf12 family.

The protein localises to the mitochondrion. It localises to the mitochondrion membrane. The protein resides in the endoplasmic reticulum. Its subcellular location is the cytoplasm. It is found in the cytosol. The sequence is that of Protein C19orf12 (C19orf12) from Homo sapiens (Human).